The following is a 959-amino-acid chain: E3 ubiquitin-protein ligase NEDD4-like (959 aa).

Residues 10 to 130 (PWHGVCVPVC…TEDPTMERPY (121 aa)) enclose the C2 domain. Disordered stretches follow at residues 183 to 206 (SNDS…WEEK), 248 to 275 (AAHR…DVPE), and 289 to 316 (DSLG…EELS). The WW 1 domain maps to 197 to 230 (PPLPPGWEEKVDNLGRTYYVNHNNRTTQWHRPSL). Ser316 is subject to Phosphoserine. Thr322 carries the phosphothreonine modification. Ser346 is modified (phosphoserine; by WNK1 and WNK4). The region spanning 369-402 (PGLPSGWEERKDAKGRTYYVNHNNRTTTWTRPIM) is the WW 2 domain. Residues 408 to 478 (GASGSATNSN…YNSPKPQHKV (71 aa)) form a disordered region. Ser430 carries the post-translational modification Phosphoserine. Ser432 bears the Phosphoserine; by SGK1 mark. Position 433 is a phosphoserine; by WNK1 and WNK4 (Ser433). Positions 444 to 455 (GAKDSPVRRAVK) are enriched in basic and acidic residues. At Ser448 the chain carries Phosphoserine; by SGK1. 4 positions are modified to phosphoserine: Ser459, Ser463, Ser467, and Ser471. WW domains lie at 481 to 514 (SFLP…DPRL) and 532 to 565 (GPLP…DPRL). An HECT domain is found at 624 to 958 (RPDVLKARLW…VENAQGFEGV (335 aa)). Cys926 acts as the Glycyl thioester intermediate in catalysis.

As to quaternary structure, interacts with UBE2E3. Interacts with NDFIP1; this interaction activates the E3 ubiquitin-protein ligase. Interacts with NDFIP2; this interaction activates the E3 ubiquitin-protein ligase. Interacts (via WW domains) with SCN1A. Interacts (via WW domains) with SCN2A. Interacts (via WW domains) with SCN3A. Interacts (via WW domains) with SCN5A. Interacts (via WW domains) with SCN8A. Interacts (via WW domains) with SCN9A. Interacts (via WW domains) with SCN10A. Interacts (via WW domains) with CLCN5. Interacts with SMAD2. Interacts with SMAD3. Interacts with SMAD6. Interacts with SMAD7. The phosphorylated form interacts with 14-3-3 proteins. Interacts with TNK2. Interacts with WNK1. Interacts with SGK1. Interacts (via C2 domain) with NPC2. Interacts with ARRDC4. Interacts with KCNQ1; promotes internalization of KCNQ1. Interacts (via domains WW1, 3 and 4) with USP36; the interaction inhibits ubiquitination of, at least, NTRK1, KCNQ2 and KCNQ3 by NEDD4L. Interacts with PRRG4 (via cytoplasmic domain). Interacts with LDLRAD3; the interaction is direct. Interacts with TTYH2 and TTYH3. Phosphorylated; which impairs interaction with SCNN. Interaction with YWHAH inhibits dephosphorylation. Post-translationally, auto-ubiquitinated.

The protein localises to the cytoplasm. It localises to the golgi apparatus. It is found in the endosome. The protein resides in the multivesicular body. It catalyses the reaction S-ubiquitinyl-[E2 ubiquitin-conjugating enzyme]-L-cysteine + [acceptor protein]-L-lysine = [E2 ubiquitin-conjugating enzyme]-L-cysteine + N(6)-ubiquitinyl-[acceptor protein]-L-lysine.. The protein operates within protein modification; protein ubiquitination. With respect to regulation, activated by NDFIP1- and NDFIP2-binding. In terms of biological role, E3 ubiquitin-protein ligase which accepts ubiquitin from an E2 ubiquitin-conjugating enzyme in the form of a thioester and then directly transfers the ubiquitin to targeted substrates. Inhibits TGF-beta signaling by triggering SMAD2 and TGFBR1 ubiquitination and proteasome-dependent degradation. Promotes ubiquitination and internalization of various plasma membrane channels such as ENaC, Nav1.2, Nav1.3, Nav1.5, Nav1.7, Nav1.8, Kv1.3, KCNH2, EAAT1 or CLC5. Promotes ubiquitination and degradation of SGK1 and TNK2. Ubiquitinates BRAT1 and this ubiquitination is enhanced in the presence of NDFIP1. Plays a role in dendrite formation by melanocytes. Involved in the regulation of TOR signaling. Ubiquitinates TTYH2 and TTYH3 and regulates protein levels of TTYH2. This is E3 ubiquitin-protein ligase NEDD4-like (NEDD4L) from Pongo abelii (Sumatran orangutan).